A 39-amino-acid polypeptide reads, in one-letter code: Cytochrome b559 subunit beta (39 aa).

Residues 14 to 30 (WLTVHGLAVPTVSFLGS) form a helical membrane-spanning segment. His18 is a binding site for heme.

This sequence belongs to the PsbE/PsbF family. In terms of assembly, heterodimer of an alpha subunit and a beta subunit. PSII is composed of 1 copy each of membrane proteins PsbA, PsbB, PsbC, PsbD, PsbE, PsbF, PsbH, PsbI, PsbJ, PsbK, PsbL, PsbM, PsbT, PsbX, PsbY, PsbZ, Psb30/Ycf12, at least 3 peripheral proteins of the oxygen-evolving complex and a large number of cofactors. It forms dimeric complexes. It depends on heme b as a cofactor.

The protein resides in the plastid. The protein localises to the chloroplast thylakoid membrane. In terms of biological role, this b-type cytochrome is tightly associated with the reaction center of photosystem II (PSII). PSII is a light-driven water:plastoquinone oxidoreductase that uses light energy to abstract electrons from H(2)O, generating O(2) and a proton gradient subsequently used for ATP formation. It consists of a core antenna complex that captures photons, and an electron transfer chain that converts photonic excitation into a charge separation. The chain is Cytochrome b559 subunit beta from Lactuca sativa (Garden lettuce).